Reading from the N-terminus, the 67-residue chain is SPbeta prophage-derived uncharacterized protein YoqF (67 aa).

The sequence is that of SPbeta prophage-derived uncharacterized protein YoqF (yoqF) from Bacillus subtilis (strain 168).